Consider the following 150-residue polypeptide: Large ribosomal subunit protein bL9 (150 aa).

The protein belongs to the bacterial ribosomal protein bL9 family.

Functionally, binds to the 23S rRNA. The sequence is that of Large ribosomal subunit protein bL9 from Clavibacter sepedonicus (Clavibacter michiganensis subsp. sepedonicus).